The chain runs to 495 residues: Lysine--tRNA ligase (495 aa).

Residues E406 and E413 each contribute to the Mg(2+) site.

Belongs to the class-II aminoacyl-tRNA synthetase family. In terms of assembly, homodimer. Mg(2+) serves as cofactor.

It is found in the cytoplasm. It carries out the reaction tRNA(Lys) + L-lysine + ATP = L-lysyl-tRNA(Lys) + AMP + diphosphate. The chain is Lysine--tRNA ligase (lysS) from Staphylococcus aureus.